The sequence spans 113 residues: uncharacterized protein (113 aa).

The N-terminal stretch at 1–38 (MVKIERKATDSAYHEFTKILTSSAQLMAFLNQSDFVKA) is a signal peptide.

This is an uncharacterized protein from Haemophilus influenzae (strain ATCC 51907 / DSM 11121 / KW20 / Rd).